We begin with the raw amino-acid sequence, 397 residues long: 2,3,4,5-tetrahydropyridine-2,6-dicarboxylate N-succinyltransferase (397 aa).

The active-site Acyl-anhydride intermediate is E265. Residues R267, G282, S285, A308, 323 to 324 (DA), G331, K360, and 373 to 376 (RQNS) each bind succinyl-CoA.

It belongs to the type 2 tetrahydrodipicolinate N-succinyltransferase family. Homotrimer.

It is found in the cytoplasm. The catalysed reaction is (S)-2,3,4,5-tetrahydrodipicolinate + succinyl-CoA + H2O = (S)-2-succinylamino-6-oxoheptanedioate + CoA. The protein operates within amino-acid biosynthesis; L-lysine biosynthesis via DAP pathway; LL-2,6-diaminopimelate from (S)-tetrahydrodipicolinate (succinylase route): step 1/3. In terms of biological role, catalyzes the conversion of the cyclic tetrahydrodipicolinate (THDP) into the acyclic N-succinyl-L-2-amino-6-oxopimelate using succinyl-CoA. This Sulfurovum sp. (strain NBC37-1) protein is 2,3,4,5-tetrahydropyridine-2,6-dicarboxylate N-succinyltransferase.